Here is a 230-residue protein sequence, read N- to C-terminus: Demethylmenaquinone methyltransferase (230 aa).

S-adenosyl-L-methionine is bound by residues T62, D80, 100–101 (DA), and S117.

The protein belongs to the class I-like SAM-binding methyltransferase superfamily. MenG/UbiE family.

It catalyses the reaction a 2-demethylmenaquinol + S-adenosyl-L-methionine = a menaquinol + S-adenosyl-L-homocysteine + H(+). Its pathway is quinol/quinone metabolism; menaquinone biosynthesis; menaquinol from 1,4-dihydroxy-2-naphthoate: step 2/2. In terms of biological role, methyltransferase required for the conversion of demethylmenaquinol (DMKH2) to menaquinol (MKH2). This is Demethylmenaquinone methyltransferase from Mycolicibacterium paratuberculosis (strain ATCC BAA-968 / K-10) (Mycobacterium paratuberculosis).